A 190-amino-acid chain; its full sequence is Potassium-transporting ATPase KdpC subunit (190 aa).

A helical transmembrane segment spans residues 6–26; it reads PAVFLVLLLTLITGLLYPLLT. The interval 67-88 is disordered; the sequence is GRPSATSDRPYNPLASSGSNLA. Residues 69-88 are compositionally biased toward polar residues; that stretch reads PSATSDRPYNPLASSGSNLA.

The protein belongs to the KdpC family. As to quaternary structure, the system is composed of three essential subunits: KdpA, KdpB and KdpC.

Its subcellular location is the cell inner membrane. Part of the high-affinity ATP-driven potassium transport (or Kdp) system, which catalyzes the hydrolysis of ATP coupled with the electrogenic transport of potassium into the cytoplasm. This subunit acts as a catalytic chaperone that increases the ATP-binding affinity of the ATP-hydrolyzing subunit KdpB by the formation of a transient KdpB/KdpC/ATP ternary complex. The chain is Potassium-transporting ATPase KdpC subunit from Erwinia tasmaniensis (strain DSM 17950 / CFBP 7177 / CIP 109463 / NCPPB 4357 / Et1/99).